The chain runs to 294 residues: Cytidine deaminase (294 aa).

CMP/dCMP-type deaminase domains follow at residues 48 to 168 (DEDA…FGPK) and 186 to 294 (LTGD…VLLA). 89-91 (NME) provides a ligand contact to substrate. Residue His-102 participates in Zn(2+) binding. Glu-104 functions as the Proton donor in the catalytic mechanism. 2 residues coordinate Zn(2+): Cys-129 and Cys-132.

The protein belongs to the cytidine and deoxycytidylate deaminase family. Homodimer. Requires Zn(2+) as cofactor.

The enzyme catalyses cytidine + H2O + H(+) = uridine + NH4(+). The catalysed reaction is 2'-deoxycytidine + H2O + H(+) = 2'-deoxyuridine + NH4(+). This enzyme scavenges exogenous and endogenous cytidine and 2'-deoxycytidine for UMP synthesis. The sequence is that of Cytidine deaminase from Escherichia coli (strain K12).